We begin with the raw amino-acid sequence, 457 residues long: RuvB-like helicase 1 (457 aa).

ATP is bound at residue 73–80; that stretch reads GGPSTGKT.

Belongs to the RuvB family. May form heterododecamers with RVB2. Component of the SWR1 chromatin remodeling complex, the INO80 chromatin remodeling complex, and of the R2TP complex.

It localises to the nucleus. It carries out the reaction ATP + H2O = ADP + phosphate + H(+). Its function is as follows. DNA helicase which participates in several chromatin remodeling complexes, including the SWR1 and the INO80 complexes. The SWR1 complex mediates the ATP-dependent exchange of histone H2A for the H2A variant HZT1 leading to transcriptional regulation of selected genes by chromatin remodeling. The INO80 complex remodels chromatin by shifting nucleosomes and is involved in DNA repair. Also involved in pre-rRNA processing. This Kluyveromyces lactis (strain ATCC 8585 / CBS 2359 / DSM 70799 / NBRC 1267 / NRRL Y-1140 / WM37) (Yeast) protein is RuvB-like helicase 1 (RVB1).